The chain runs to 200 residues: 3-isopropylmalate dehydratase small subunit (200 aa).

This sequence belongs to the LeuD family. LeuD type 1 subfamily. In terms of assembly, heterodimer of LeuC and LeuD.

The enzyme catalyses (2R,3S)-3-isopropylmalate = (2S)-2-isopropylmalate. It functions in the pathway amino-acid biosynthesis; L-leucine biosynthesis; L-leucine from 3-methyl-2-oxobutanoate: step 2/4. Functionally, catalyzes the isomerization between 2-isopropylmalate and 3-isopropylmalate, via the formation of 2-isopropylmaleate. The polypeptide is 3-isopropylmalate dehydratase small subunit (Histophilus somni (strain 129Pt) (Haemophilus somnus)).